A 66-amino-acid chain; its full sequence is ATP synthase F(0) complex subunit 8 (66 aa).

Residues 8–24 (IWLLAVVIVLTTLMIFL) traverse the membrane as a helical segment. The residue at position 54 (Lys54) is an N6-acetyllysine; alternate. At Lys54 the chain carries N6-succinyllysine; alternate. Lys57 bears the N6-acetyllysine mark.

Belongs to the ATPase protein 8 family. Component of the ATP synthase complex composed at least of ATP5F1A/subunit alpha, ATP5F1B/subunit beta, ATP5MC1/subunit c (homooctomer), MT-ATP6/subunit a, MT-ATP8/subunit 8, ATP5ME/subunit e, ATP5MF/subunit f, ATP5MG/subunit g, ATP5MK/subunit k, ATP5MJ/subunit j, ATP5F1C/subunit gamma, ATP5F1D/subunit delta, ATP5F1E/subunit epsilon, ATP5PF/subunit F6, ATP5PB/subunit b, ATP5PD/subunit d, ATP5PO/subunit OSCP. ATP synthase complex consists of a soluble F(1) head domain (subunits alpha(3) and beta(3)) - the catalytic core - and a membrane F(0) domain - the membrane proton channel (subunits c, a, 8, e, f, g, k and j). These two domains are linked by a central stalk (subunits gamma, delta, and epsilon) rotating inside the F1 region and a stationary peripheral stalk (subunits F6, b, d, and OSCP). Interacts with PRICKLE3.

The protein resides in the mitochondrion membrane. In terms of biological role, subunit 8, of the mitochondrial membrane ATP synthase complex (F(1)F(0) ATP synthase or Complex V) that produces ATP from ADP in the presence of a proton gradient across the membrane which is generated by electron transport complexes of the respiratory chain. ATP synthase complex consist of a soluble F(1) head domain - the catalytic core - and a membrane F(1) domain - the membrane proton channel. These two domains are linked by a central stalk rotating inside the F(1) region and a stationary peripheral stalk. During catalysis, ATP synthesis in the catalytic domain of F(1) is coupled via a rotary mechanism of the central stalk subunits to proton translocation. In vivo, can only synthesize ATP although its ATP hydrolase activity can be activated artificially in vitro. Part of the complex F(0) domain. The protein is ATP synthase F(0) complex subunit 8 of Loxodonta africana (African elephant).